An 82-amino-acid chain; its full sequence is Probable [Fe-S]-dependent transcriptional repressor (82 aa).

Iron-sulfur cluster is bound by residues Cys-56, Cys-61, Cys-64, and Cys-71.

Belongs to the FeoC family.

Its function is as follows. May function as a transcriptional regulator that controls feoABC expression. The sequence is that of Probable [Fe-S]-dependent transcriptional repressor from Yersinia enterocolitica serotype O:8 / biotype 1B (strain NCTC 13174 / 8081).